Consider the following 179-residue polypeptide: Large ribosomal subunit protein uL6 (179 aa).

It belongs to the universal ribosomal protein uL6 family. Part of the 50S ribosomal subunit.

Functionally, this protein binds to the 23S rRNA, and is important in its secondary structure. It is located near the subunit interface in the base of the L7/L12 stalk, and near the tRNA binding site of the peptidyltransferase center. The chain is Large ribosomal subunit protein uL6 from Mycobacterium ulcerans (strain Agy99).